The following is a 176-amino-acid chain: Transcription termination/antitermination protein NusG (176 aa).

Residues 125-149 (GEVVRVVEGPFANFTATVEEYDVEH) form the KOW domain.

Belongs to the NusG family.

In terms of biological role, participates in transcription elongation, termination and antitermination. In Helicobacter pylori (strain J99 / ATCC 700824) (Campylobacter pylori J99), this protein is Transcription termination/antitermination protein NusG.